The sequence spans 355 residues: Squamosa promoter-binding protein-like 15 (355 aa).

The interval 1-27 (MELLKGSGLNQTESGGSSSTESSSLSG) is disordered. Over residues 12-27 (TESGGSSSTESSSLSG) the composition is skewed to low complexity. Residues 61 to 138 (TARCQVEGCR…ACHNERRRKP (78 aa)) form an SBP-type zinc finger. The Zn(2+) site is built by Cys64, Cys69, Cys86, His89, Cys105, Cys108, His112, and Cys124. The short motif at 121–137 (KRSCRRRLACHNERRRK) is the Bipartite nuclear localization signal element.

Its subcellular location is the nucleus. In terms of biological role, probable transcription factor required for the flowering response to vernalization in the shoot apical meristem (SAM). Defines the competence of shoot meristems to flower in response to vernalization in perennials. This is Squamosa promoter-binding protein-like 15 from Arabis alpina (Alpine rock-cress).